The primary structure comprises 1083 residues: Ubiquitin carboxyl-terminal hydrolase 1 (1083 aa).

The segment at 30–165 (RSCVHFDKYV…KKDLLLEVVK (136 aa)) adopts a UBP-type zinc-finger fold. Residues Cys32, His34, Cys56, Cys59, Cys95, Cys98, Cys103, His115, His119, His125, Cys139, and Cys142 each contribute to the Zn(2+) site. The 882-residue stretch at 202–1083 (RGLVNLGNTC…EAYILFYERI (882 aa)) folds into the USP domain. Cys211 acts as the Nucleophile in catalysis. Disordered regions lie at residues 387–424 (KDSEVVSAKPASDHNSTVPLFPSDHKIQSRPETSDNET) and 450–486 (GSTETLMHDNDRTGKTVPDKEDVRATQSNEETSASGI). 2 stretches are compositionally biased toward basic and acidic residues: residues 409-419 (SDHKIQSRPET) and 455-473 (LMHDNDRTGKTVPDKEDVR). The span at 474-485 (ATQSNEETSASG) shows a compositional bias: polar residues. His1029 acts as the Proton acceptor in catalysis.

This sequence belongs to the peptidase C19 family.

The enzyme catalyses Thiol-dependent hydrolysis of ester, thioester, amide, peptide and isopeptide bonds formed by the C-terminal Gly of ubiquitin (a 76-residue protein attached to proteins as an intracellular targeting signal).. Functionally, recognizes and hydrolyzes the peptide bond at the C-terminal Gly of ubiquitin. Involved in the processing of poly-ubiquitin precursors as well as that of ubiquitinated proteins. Is involved in resistance to the arginine analog canavanine (CAN). This chain is Ubiquitin carboxyl-terminal hydrolase 1 (UBP1), found in Arabidopsis thaliana (Mouse-ear cress).